The sequence spans 82 residues: Small ribosomal subunit protein uS17 (82 aa).

It belongs to the universal ribosomal protein uS17 family. As to quaternary structure, part of the 30S ribosomal subunit.

Its function is as follows. One of the primary rRNA binding proteins, it binds specifically to the 5'-end of 16S ribosomal RNA. The polypeptide is Small ribosomal subunit protein uS17 (Synechococcus elongatus (strain ATCC 33912 / PCC 7942 / FACHB-805) (Anacystis nidulans R2)).